We begin with the raw amino-acid sequence, 74 residues long: Small ribosomal subunit protein bS18 (74 aa).

Belongs to the bacterial ribosomal protein bS18 family. As to quaternary structure, part of the 30S ribosomal subunit. Forms a tight heterodimer with protein bS6.

Binds as a heterodimer with protein bS6 to the central domain of the 16S rRNA, where it helps stabilize the platform of the 30S subunit. The polypeptide is Small ribosomal subunit protein bS18 (Natranaerobius thermophilus (strain ATCC BAA-1301 / DSM 18059 / JW/NM-WN-LF)).